Reading from the N-terminus, the 421-residue chain is UPF0415 protein C7orf25 (421 aa).

The protein belongs to the UPF0415 family.

The polypeptide is UPF0415 protein C7orf25 (C7orf25) (Homo sapiens (Human)).